A 978-amino-acid polypeptide reads, in one-letter code: MALAVLHVLEPFPTETPPLAVLLPPGGPWPVTGVGLVLALRPASESPAGPALLVAAVEGSGAQCEQRGPGPPPLLVSRTLLRVLALSPGARVRARPVRRPPALGWALLGTSPGPGLGPRVGPLLVRRGETLPVPGSRVLETRPALQGLLGPGTRLAVTELQGRTKLDPESRDHNHPPPPPVVSSFAVSHSIRQLRGVLGGTGDALGVSRSCLRSLGLFQGEWVWVARVGELPNTSQPHLAQVQVLEPRWDLSARLGPNSGQPGEPLADGLVFVPATLAFNLGCDPLEVGELRIQRYLEDSTAAEDKGSCSLLPGPPFARELHIEVLPSPHCGVNGKYDHVLYQHFHTPRVVQEGDVLCVSTAGQVEILEGSLERLPRWREVFFKVKKTVGEAPDGPASAFLADTTHTSLYLAGTTLSRVPPLPSGRSPPWDSLSPPGLEALVNELCAVLKPHLQPGGTLLTGTSCVLLQGPPGSGKTTAVTAACSRLGLHLLKVPCSSLCADSSRTVETKLQTTFSRARRCRPVVLLLTALDLLGRDRDGLGEDARVVATLRHLLLDEDPLSRCPPLMVVATTSRVQDLPTDVRTAFPHELEVPVLSESQRLSVLQALTAHLPLGQEVNLSQLARRCAGFVVGDLYALLTHASRAACTRIKAAGLAMSEEDEGELCAAGFPLLAEDFGQALDQLQTAHSQAVGAPKIPSVSWHDVGGLQDVKKEILETIQLPLEHPELLSLGLRRSGLLLHGPPGTGKTLLAKAVATECSLTFLSVKGPELINMYVGQSEENVREVFARARAAAPCIIFFDELDSLAPSRGRSGDSGGVMDRVVSQLLAELDGLHSTQDVFVIGATNRPDLLDPALLRPGRFDKLVFVGASEDRASQLRVLSAITRKFKLEASVSLMNVLDCCPPQLTGADLYSLCSDAMMTALKRRVRDLEEGLEPRSSALLLTMEDLLQAAARLQPSVSEQELLRYKRIQRKFAAC.

At arginine 119 the chain carries Omega-N-methylarginine. Residues 470–477 (GPPGSGKT) and 742–749 (GPPGTGKT) each bind ATP.

It belongs to the AAA ATPase family. In terms of assembly, interacts with PEX1; forming the PEX1-PEX6 AAA ATPase complex, which is composed of a heterohexamer formed by a trimer of PEX1-PEX6 dimers. Interacts with PEX26; interaction is direct and promotes recruitment to peroxisomal membranes. Interacts with ZFAND6.

It is found in the cytoplasm. The protein resides in the cytosol. It localises to the peroxisome membrane. Its subcellular location is the cell projection. The protein localises to the cilium. It is found in the photoreceptor outer segment. The enzyme catalyses ATP + H2O = ADP + phosphate + H(+). In terms of biological role, component of the PEX1-PEX6 AAA ATPase complex, a protein dislocase complex that mediates the ATP-dependent extraction of the PEX5 receptor from peroxisomal membranes, an essential step for PEX5 recycling. Specifically recognizes PEX5 monoubiquitinated at 'Cys-11', and pulls it out of the peroxisome lumen through the PEX2-PEX10-PEX12 retrotranslocation channel. Extraction by the PEX1-PEX6 AAA ATPase complex is accompanied by unfolding of the TPR repeats and release of bound cargo from PEX5. The protein is Peroxisomal ATPase PEX6 of Rattus norvegicus (Rat).